We begin with the raw amino-acid sequence, 368 residues long: Large ribosomal subunit protein bL27m (368 aa).

Residues Met1–Thr20 constitute a mitochondrion transit peptide. The tract at residues Lys23–Lys44 is disordered. Basic and acidic residues predominate over residues Ser31–Lys44.

The protein belongs to the bacterial ribosomal protein bL27 family.

Its subcellular location is the mitochondrion. Component of the large subunit of mitochondrial ribosome. The protein is Large ribosomal subunit protein bL27m (MRPL2) of Candida glabrata (strain ATCC 2001 / BCRC 20586 / JCM 3761 / NBRC 0622 / NRRL Y-65 / CBS 138) (Yeast).